The chain runs to 312 residues: Glyoxylate/hydroxypyruvate reductase A (312 aa).

The active site involves R227. H275 acts as the Proton donor in catalysis.

It belongs to the D-isomer specific 2-hydroxyacid dehydrogenase family. GhrA subfamily.

Its subcellular location is the cytoplasm. The catalysed reaction is glycolate + NADP(+) = glyoxylate + NADPH + H(+). It carries out the reaction (R)-glycerate + NAD(+) = 3-hydroxypyruvate + NADH + H(+). The enzyme catalyses (R)-glycerate + NADP(+) = 3-hydroxypyruvate + NADPH + H(+). In terms of biological role, catalyzes the NADPH-dependent reduction of glyoxylate and hydroxypyruvate into glycolate and glycerate, respectively. This Escherichia coli O6:K15:H31 (strain 536 / UPEC) protein is Glyoxylate/hydroxypyruvate reductase A.